The following is a 1646-amino-acid chain: Monensin-resistant homolog 2 (1646 aa).

The protein belongs to the MON2 family.

The protein resides in the golgi apparatus. In terms of biological role, may be required for traffic between late Golgi and early endosomes. The protein is Monensin-resistant homolog 2 (mon-2) of Caenorhabditis elegans.